The following is a 270-amino-acid chain: Cell surface glycoprotein CD200 receptor 4 (270 aa).

The N-terminal stretch at 1 to 25 (MHALGRIPTLTLLIFINIFVSGSSC) is a signal peptide. The Ig-like V-type domain maps to 26-145 (TDENQTIQND…GNLEKVYDLQ (120 aa)). At 26–241 (TDENQTIQND…TMTTPRSLLT (216 aa)) the chain is on the extracellular side. Asn-29 and Asn-44 each carry an N-linked (GlcNAc...) asparagine glycan. Intrachain disulfides connect Cys-58–Cys-129, Cys-82–Cys-97, Cys-164–Cys-213, and Cys-183–Cys-201. One can recognise an Ig-like C2-type domain in the interval 134–229 (PEGNLEKVYD…GNQSLSIELS (96 aa)). Asn-192 carries an N-linked (GlcNAc...) asparagine glycan. A helical membrane pass occupies residues 242–262 (ILYVKMALLVIILLNVGFAFF). Residues 263–270 (QKRNFART) lie on the Cytoplasmic side of the membrane.

Belongs to the CD200R family. In terms of assembly, interacts with TYROBP. In terms of tissue distribution, highly expressed in monocytes, NK cells and a subset of NKT cells. Weakly expressed in granulocytes and B-cells (at protein level). Expressed in brain, lung, testis, thymus, intestine and uterus. Expressed in bone marrow derived-macrophage and dendritic cells and mast cells.

The protein localises to the membrane. Involved in the recruitment or surface expression of the TYROBP receptor. The chain is Cell surface glycoprotein CD200 receptor 4 (Cd200r4) from Mus musculus (Mouse).